A 116-amino-acid polypeptide reads, in one-letter code: Histone H2B (116 aa).

The span at 1 to 11 (TSGKAAKKAGK) shows a compositional bias: basic residues. The interval 1-25 (TSGKAAKKAGKAQKSITKGDKKKRK) is disordered. 3 positions are modified to N6-acetyllysine: K4, K11, and K14. An O-linked (GlcNAc) serine glycan is attached at S103. Residue K111 forms a Glycyl lysine isopeptide (Lys-Gly) (interchain with G-Cter in ubiquitin) linkage.

In terms of assembly, the nucleosome is a histone octamer containing two molecules each of H2A, H2B, H3 and H4 assembled in one H3-H4 heterotetramer and two H2A-H2B heterodimers. The octamer wraps approximately 147 bp of DNA. Post-translationally, monoubiquitination gives a specific tag for epigenetic transcriptional activation and is also prerequisite for histone H3 'Lys-4' and 'Lys-79' methylation. GlcNAcylation at Ser-103 promotes monoubiquitination of Lys-111. It fluctuates in response to extracellular glucose, and associates with transcribed genes.

Its subcellular location is the nucleus. The protein localises to the chromosome. Functionally, core component of nucleosome. Nucleosomes wrap and compact DNA into chromatin, limiting DNA accessibility to the cellular machineries which require DNA as a template. Histones thereby play a central role in transcription regulation, DNA repair, DNA replication and chromosomal stability. DNA accessibility is regulated via a complex set of post-translational modifications of histones, also called histone code, and nucleosome remodeling. A mixture of histones H2B and H4 has antimicrobial activity against the Gram-positive bacterium M.luteus. The sequence is that of Histone H2B from Penaeus vannamei (Whiteleg shrimp).